A 370-amino-acid polypeptide reads, in one-letter code: Proto-oncogene Wnt-1 (370 aa).

A signal peptide spans 1–27 (MGLWALLPGWVSATLLLALAALPAALA). N-linked (GlcNAc...) asparagine glycosylation occurs at asparagine 29. Disulfide bonds link cysteine 93/cysteine 104, cysteine 143/cysteine 151, cysteine 153/cysteine 170, cysteine 218/cysteine 232, cysteine 220/cysteine 227, cysteine 299/cysteine 330, cysteine 315/cysteine 325, cysteine 329/cysteine 369, cysteine 345/cysteine 360, cysteine 347/cysteine 357, and cysteine 352/cysteine 353. A lipid anchor (O-palmitoleoyl serine; by PORCN) is attached at serine 224. Residues asparagine 316 and asparagine 346 are each glycosylated (N-linked (GlcNAc...) asparagine). A glycan (N-linked (GlcNAc...) asparagine) is linked at asparagine 359.

Belongs to the Wnt family. Forms a soluble 1:1 complex with AFM; this prevents oligomerization and is required for prolonged biological activity. The complex with AFM may represent the physiological form in body fluids. Interacts with PORCN. Interacts with RSPO1, RSPO2 and RSPO3. Interacts with WLS. Post-translationally, palmitoleoylation is required for efficient binding to frizzled receptors. Palmitoleoylation is necessary for proper trafficking to cell surface. Depalmitoleoylated by NOTUM, leading to inhibit Wnt signaling pathway.

It is found in the secreted. It localises to the extracellular space. Its subcellular location is the extracellular matrix. Ligand for members of the frizzled family of seven transmembrane receptors. Acts in the canonical Wnt signaling pathway by promoting beta-catenin-dependent transcriptional activation. In some developmental processes, is also a ligand for the coreceptor RYK, thus triggering Wnt signaling. Plays an essential role in the development of the embryonic brain and central nervous system (CNS). Has a role in osteoblast function, bone development and bone homeostasis. This is Proto-oncogene Wnt-1 (WNT1) from Homo sapiens (Human).